Consider the following 287-residue polypeptide: Glutamate racemase (287 aa).

Residues 1-15 (MATKPQDANTTSREA) are compositionally biased toward polar residues. Positions 1-25 (MATKPQDANTTSREAITSKADSPPR) are disordered. Substrate is bound by residues 32–33 (DS) and 64–65 (YG). Cys96 acts as the Proton donor/acceptor in catalysis. Substrate is bound at residue 97-98 (NT). Residue Cys208 is the Proton donor/acceptor of the active site. A substrate-binding site is contributed by 209-210 (TH).

The protein belongs to the aspartate/glutamate racemases family.

It catalyses the reaction L-glutamate = D-glutamate. It functions in the pathway cell wall biogenesis; peptidoglycan biosynthesis. In terms of biological role, provides the (R)-glutamate required for cell wall biosynthesis. The chain is Glutamate racemase from Yersinia pseudotuberculosis serotype O:1b (strain IP 31758).